Here is a 157-residue protein sequence, read N- to C-terminus: SsrA-binding protein (157 aa).

The protein belongs to the SmpB family.

It is found in the cytoplasm. Functionally, required for rescue of stalled ribosomes mediated by trans-translation. Binds to transfer-messenger RNA (tmRNA), required for stable association of tmRNA with ribosomes. tmRNA and SmpB together mimic tRNA shape, replacing the anticodon stem-loop with SmpB. tmRNA is encoded by the ssrA gene; the 2 termini fold to resemble tRNA(Ala) and it encodes a 'tag peptide', a short internal open reading frame. During trans-translation Ala-aminoacylated tmRNA acts like a tRNA, entering the A-site of stalled ribosomes, displacing the stalled mRNA. The ribosome then switches to translate the ORF on the tmRNA; the nascent peptide is terminated with the 'tag peptide' encoded by the tmRNA and targeted for degradation. The ribosome is freed to recommence translation, which seems to be the essential function of trans-translation. This is SsrA-binding protein from Limosilactobacillus reuteri (strain DSM 20016) (Lactobacillus reuteri).